The sequence spans 268 residues: Proliferating cell nuclear antigen (268 aa).

The DNA-binding element occupies 61 to 80; sequence RCDRNPSMGMNLNNMAKMLK.

It belongs to the PCNA family.

It localises to the nucleus. In terms of biological role, this protein is an auxiliary protein of DNA polymerase delta and is involved in the control of eukaryotic DNA replication by increasing the polymerase's processibility during elongation of the leading strand. This Catharanthus roseus (Madagascar periwinkle) protein is Proliferating cell nuclear antigen.